A 221-amino-acid polypeptide reads, in one-letter code: UPF0758 protein CGSHiEE_07200 (221 aa).

Residues 99-221 (IINDPETVKL…CYSFAENCLL (123 aa)) form the MPN domain. Zn(2+) contacts are provided by H170, H172, and D183. The JAMM motif signature appears at 170-183 (HNHPSGVTEPSYSD).

This sequence belongs to the UPF0758 family.

In Haemophilus influenzae (strain PittEE), this protein is UPF0758 protein CGSHiEE_07200.